A 286-amino-acid polypeptide reads, in one-letter code: 4-hydroxybenzoate octaprenyltransferase (286 aa).

Transmembrane regions (helical) follow at residues 21-40 (GTLL…AGGM), 96-116 (LFVI…GLVV), 142-162 (FLGV…TGEV), 167-187 (WWLF…YAMV), 210-230 (QIIG…GWSA), 235-255 (LYGL…MLIF), and 266-286 (FLNN…DYLF).

It belongs to the UbiA prenyltransferase family. Requires Mg(2+) as cofactor.

Its subcellular location is the cell inner membrane. It catalyses the reaction all-trans-octaprenyl diphosphate + 4-hydroxybenzoate = 4-hydroxy-3-(all-trans-octaprenyl)benzoate + diphosphate. Its pathway is cofactor biosynthesis; ubiquinone biosynthesis. Its function is as follows. Catalyzes the prenylation of para-hydroxybenzoate (PHB) with an all-trans polyprenyl group. Mediates the second step in the final reaction sequence of ubiquinone-8 (UQ-8) biosynthesis, which is the condensation of the polyisoprenoid side chain with PHB, generating the first membrane-bound Q intermediate 3-octaprenyl-4-hydroxybenzoate. The polypeptide is 4-hydroxybenzoate octaprenyltransferase (Shewanella sp. (strain ANA-3)).